The primary structure comprises 301 residues: GTPase Era (301 aa).

The Era-type G domain maps to 7–175 (YCGFIAIVGR…ASIVRKHLPE (169 aa)). The tract at residues 15-22 (GRPNVGKS) is G1. GTP is bound at residue 15–22 (GRPNVGKS). The segment at 41–45 (QTTRH) is G2. A G3 region spans residues 62–65 (DTPG). Residues 62–66 (DTPGL) and 124–127 (NKVD) contribute to the GTP site. A G4 region spans residues 124–127 (NKVD). The segment at 154 to 156 (ISA) is G5. Residues 206–283 (LGAELPYSVT…HLELWVKVKS (78 aa)) enclose the KH type-2 domain.

The protein belongs to the TRAFAC class TrmE-Era-EngA-EngB-Septin-like GTPase superfamily. Era GTPase family. In terms of assembly, monomer.

It is found in the cytoplasm. The protein resides in the cell inner membrane. In terms of biological role, an essential GTPase that binds both GDP and GTP, with rapid nucleotide exchange. Plays a role in 16S rRNA processing and 30S ribosomal subunit biogenesis and possibly also in cell cycle regulation and energy metabolism. The chain is GTPase Era from Salmonella arizonae (strain ATCC BAA-731 / CDC346-86 / RSK2980).